A 360-amino-acid chain; its full sequence is Small ribosomal subunit protein mS22 (360 aa).

Ser-54 carries the post-translational modification Phosphoserine. Lys-211 bears the N6-acetyllysine mark.

It belongs to the mitochondrion-specific ribosomal protein mS22 family. In terms of assembly, component of the mitochondrial small ribosomal subunit (mt-SSU). Mature mammalian 55S mitochondrial ribosomes consist of a small (28S) and a large (39S) subunit. The 28S small subunit contains a 12S ribosomal RNA (12S mt-rRNA) and 30 different proteins. The 39S large subunit contains a 16S rRNA (16S mt-rRNA), a copy of mitochondrial valine transfer RNA (mt-tRNA(Val)), which plays an integral structural role, and 52 different proteins.

The protein localises to the mitochondrion. The chain is Small ribosomal subunit protein mS22 (MRPS22) from Homo sapiens (Human).